Here is a 2327-residue protein sequence, read N- to C-terminus: MLQVVPGSLDTAPCAFPTENLPGRGFQSIPLDLSSSGAIASEVLLRSWAVVLRYYVGSDMIAFGRIDDTDPASQFAVCHGDIPATATLEELKASSLSGNPNSLPLSEWIASNTFNTIVWNGTSFPLEKLETTSCSLALLVSDTPSLAFASHAIGENVAAAVAEGVAHVADIITNQPQTTIGAVDLFGAVSWSQLQEWNSTVPNMIEVCMHDLIDTQAKSRPDSTALDCWDGSVSYAQLVDYTSRLGSFLVTQNVGPEVFVPVCFDKSLWAVVSMIGVMKAGGAFVCIDPAQPVDRLETIISEVNAQVALGAPAYREALAGLVPNAIAIDADFILSLPPSTELPRVLPKDAAFAIFTSGSTGKPKGIVHEHRTMCSSARRHAAALNINSTTRTFQFAAYTFIVNTFELFTPLVEGGCVCVPSKEDRLGRTTGAMRDLNANWACLTPSFLRSIKPEDVPQLKTLLLAGEPVQQDNLDTWRHRVKMLNMYGASEASICVAGDLSGPVGRSTIGVGAGCTTWVVDPIDHDRLAPLGAIGELVIEGPILAREYIHQPEKTAEVFISNTPWMEEIRGALPSRAYKTGDLVRYGTDGRINLVGRKDMQIKLRGQRVELEEVEFHLRQLIPRGTEVAVGLVKPVDQPDRPMLAIFASLTKAFGENFSPVNEDLAADIESRMAGWKDKLGDSVPGYMVPSTVVKLNHMPLTASGKTNRKAIGDFACTLTIAALTGAAKKEHKEPATATGKVLRGIWADVLSLKEESISSDDSFLQLGGNSIDAMKLVNLTRDVQLGLSVAKIFTYPVLDEMADACTKVIVQSFEDVPFGLITGKTDSLIQEAALQCQVGPLAIEDLYPCTAMQEGLMALSDSREGAYVAQHSLSLGPSIDLNRFKKACQKVVDAHPILRTCIVYPEQSRALQAVVQGEIEWHTAEDLETYAKEDKARPMCAGQLLTRYGLVPDGEGWTFVWTVHHAVYDAWTLELTFDRLDKAYKGHPLERDTTFKEFIQHMVTTDESESDNFWREYLAGATRNEFPSAVSTSKQPVADSSVKYSMSLIRTDGLSGITVASMIRAAWGILIGSHSESDDVVFGGIVSGRNAPIANADKLFGPGIAAVPVRVKFPDNDTLTIREFIGDVQDQSTKMISFEQAGLQNIRRVSSDATAACDFQTLLVVQPHKEKHLSTEEIDLRAASEADANFGTYALTLECSLKSDGVVCSAHYDSSLVSKESVERILGQLENLLHQMCSSSADKKLNELIFISSKDQESIRGWNRHIPKPIHKTIHQMIAERIAERPDHEAVCSWDGSLTYAELDQHASRLARRLAQLDVQPESFVPCCFEKSTWAIPAMLGVLRAGGAFLNLDPSQPANRIQLMIRKLKSKTIVCSPSQYDLCRSMGEEYNIVVFDTQSPEESLPDMPPVDVKPENAAYVIFTSGSTGEPKGTIIQHGHYAIGSVTHAPAMLIDGNTRALQFASFTFDASLVETITILITGGCICVASEEQRKRDVAEAVRATRANWAALTPSFVNLLSPDDVPSIKVLILAGEAMSQSHIDTWGKRLRLVNGYGPSECCVASTSTIDVVPGVSPRNIGFTCSGASWVVMPTNHHRLMPVGSVGELVLEGWNVGRGYLDEPAKTEAAFVENPLWMDLGDEMRAPVVYKTGDLVRYNADGSLDFQRRKDTQVKLRGQRVELGEIEYRITQSLPNKPHAVVDIVCPKDAPDQPRLVAFIQVPASEARRKPTSIFMLNQPESMIPEPNERHVSSLSGLEDRLSDFLPMHMIPSAYIPVYHIPKMPSGKADRKTLIRIGSGLTHRRMAEYSGATEDARPPTTDMQITMQELWGETLKMPAAQINLNDNFLRLGGDSITAMRLASAARAKGIPLSTATIFQHPTLEAISAVAETLSHQQRPQSFEPFSTLKSIPKDQLIDDIIIPQLGVPAFQIQDALESTDFQSLAINGGLNQTRGWSNYLIFDFEGPIDLRRLQVACEQLVAHHAVLRTVFLSTGSELIQVILRSVAPEYSIHIQDEEDPTESLIREDLARPPHLGEAIVRFMLVKDDATHHRLIMRISHAQYDGSSMPHLMHDLRVAYRGEELPKRAQFSDFVRTQLHTSDGSKSFYKDMLSGSQMTSVVSHTKSSVTNVLNTMLAEMVPLVAFKDHGITAATVVKAAWALVLADMAATADVVYGHMVSGRNLPLDGVESMMGPCLNIVPVRANMNSMHTILDLLRHIQQQQTDTIPHESLGFQQIIDQCTDWTPATRFSSVFQYQDFGGEEAAPGQPVSFESVLKCTPGFVCPAPDACDMSLLATPVARVDLPRRPSPAGDTRDGPTAASDSPSRAR.

The adenylation 1 stretch occupies residues 214–605 (DTQAKSRPDS…GRKDMQIKLR (392 aa)). A Carrier 1 domain is found at 734–810 (EPATATGKVL…EMADACTKVI (77 aa)). Residue S771 is modified to O-(pantetheine 4'-phosphoryl)serine. A condensation 1 region spans residues 845-1259 (EDLYPCTAMQ…IFISSKDQES (415 aa)). Residues 1281 to 1675 (ERIAERPDHE…RRKDTQVKLR (395 aa)) are adenylation 2. A Carrier 2 domain is found at 1816-1892 (PPTTDMQITM…AISAVAETLS (77 aa)). S1853 is modified (O-(pantetheine 4'-phosphoryl)serine). Residues 1937-2260 (TDFQSLAING…VFQYQDFGGE (324 aa)) are condensation 2. Residues 2299 to 2327 (RVDLPRRPSPAGDTRDGPTAASDSPSRAR) are disordered.

The protein belongs to the NRP synthetase family.

It catalyses the reaction N-benzoyl-L-phenylalaninol + benzoate + L-phenylalanine + 2 ATP = asperphenamate + 2 AMP + 2 diphosphate + H(+). It participates in secondary metabolite biosynthesis. Nonribosomal peptide synthetase; part of the gene cluster that mediates the biosynthesis of asperphenamate, a rare linear amino acid ester that exhibits antitumor activity towards a number of cell lines. The structure of asperphenamate contains two subunits, N-benzoylphenylalanine and N-benzoylphenylalaninol, which are connected by an inter-molecular ester bond. The first step of asperphenamate biosynthesis is the generation of N-benzoylphenylalaninol by the nonribosomal peptide synthase apmA. Using phenylalanine and benzoic acid as substrates, apmA catalyzes amide bond formation and tethers the intermediate into the NRPS chain. Then, the terminal R domain of apmA catalyzes the reduction reaction to get the shunt product N-benzoylphenylalaninol. Subsequently, the nonribosomal peptide synthase apmB activates the same substrates as does apmA (phenylalanine and benzoic acid) to produce N-benzoylphenylalanine before condensing N-benzoylphenylalanine and N-benzoylphenylalaninol to release asperphenamate. The protein is Nonribosomal peptide synthetase apmB of Penicillium brevicompactum.